Here is a 205-residue protein sequence, read N- to C-terminus: Nuclear transcription factor Y subunit C-6 (205 aa).

Positions 1–24 are disordered; the sequence is MEPKSTTPPPPPPPPVLGAPVPYP.

It belongs to the NFYC/HAP5 subunit family. Heterotrimeric transcription factor composed of three components, NF-YA, NF-YB and NF-YC. NF-YB and NF-YC must interact and dimerize for NF-YA association and DNA binding. Interacts with NFYB2. Interacts with NFYB8, NFYB10 and HD5/NFYB11.

It is found in the nucleus. Its subcellular location is the cytoplasm. Functionally, component of the NF-Y/HAP transcription factor complex. The sequence is that of Nuclear transcription factor Y subunit C-6 from Oryza sativa subsp. japonica (Rice).